The chain runs to 400 residues: CCA-adding enzyme (400 aa).

ATP contacts are provided by Gly32 and Arg35. Positions 32 and 35 each coordinate CTP. Mg(2+) contacts are provided by Asp45 and Asp47. ATP is bound by residues Arg116, Asp159, Arg162, Arg165, and Arg168. Residues Arg116, Asp159, Arg162, Arg165, and Arg168 each coordinate CTP.

It belongs to the tRNA nucleotidyltransferase/poly(A) polymerase family. Bacterial CCA-adding enzyme type 3 subfamily. Homodimer. Mg(2+) is required as a cofactor.

It carries out the reaction a tRNA precursor + 2 CTP + ATP = a tRNA with a 3' CCA end + 3 diphosphate. It catalyses the reaction a tRNA with a 3' CCA end + 2 CTP + ATP = a tRNA with a 3' CCACCA end + 3 diphosphate. Catalyzes the addition and repair of the essential 3'-terminal CCA sequence in tRNAs without using a nucleic acid template. Adds these three nucleotides in the order of C, C, and A to the tRNA nucleotide-73, using CTP and ATP as substrates and producing inorganic pyrophosphate. tRNA 3'-terminal CCA addition is required both for tRNA processing and repair. Also involved in tRNA surveillance by mediating tandem CCA addition to generate a CCACCA at the 3' terminus of unstable tRNAs. While stable tRNAs receive only 3'-terminal CCA, unstable tRNAs are marked with CCACCA and rapidly degraded. The polypeptide is CCA-adding enzyme (Limosilactobacillus fermentum (strain NBRC 3956 / LMG 18251) (Lactobacillus fermentum)).